Reading from the N-terminus, the 301-residue chain is Acetyl-coenzyme A carboxylase carboxyl transferase subunit beta (301 aa).

The CoA carboxyltransferase N-terminal domain maps to 23–292 (VWTKCDSCGQ…PSPDEPRESV (270 aa)). 4 residues coordinate Zn(2+): C27, C30, C46, and C49. A C4-type zinc finger spans residues 27 to 49 (CDSCGQVLYRAELERNLEVCPKC). The segment at 280-301 (LPAPSPDEPRESVVVPDQEPEA) is disordered.

Belongs to the AccD/PCCB family. As to quaternary structure, acetyl-CoA carboxylase is a heterohexamer composed of biotin carboxyl carrier protein (AccB), biotin carboxylase (AccC) and two subunits each of ACCase subunit alpha (AccA) and ACCase subunit beta (AccD). It depends on Zn(2+) as a cofactor.

It is found in the cytoplasm. It carries out the reaction N(6)-carboxybiotinyl-L-lysyl-[protein] + acetyl-CoA = N(6)-biotinyl-L-lysyl-[protein] + malonyl-CoA. Its pathway is lipid metabolism; malonyl-CoA biosynthesis; malonyl-CoA from acetyl-CoA: step 1/1. In terms of biological role, component of the acetyl coenzyme A carboxylase (ACC) complex. Biotin carboxylase (BC) catalyzes the carboxylation of biotin on its carrier protein (BCCP) and then the CO(2) group is transferred by the transcarboxylase to acetyl-CoA to form malonyl-CoA. This chain is Acetyl-coenzyme A carboxylase carboxyl transferase subunit beta, found in Enterobacter sp. (strain 638).